The sequence spans 224 residues: Protein HLJ1 (224 aa).

Residues Asp18–Asp87 form the J domain. Residues Ile84–Met93 are compositionally biased toward basic and acidic residues. The disordered stretch occupies residues Ile84–Gly107. Ser109 carries the phosphoserine modification. The disordered stretch occupies residues Asn173 to Gln192. The span at Arg181–Gln192 shows a compositional bias: low complexity.

This is Protein HLJ1 (HLJ1) from Saccharomyces cerevisiae (strain ATCC 204508 / S288c) (Baker's yeast).